Consider the following 310-residue polypeptide: Mitochondrial citrate transporter E (310 aa).

3 Solcar repeats span residues 2–95, 107–199, and 208–293; these read STTT…LRQG, QSLG…AKRR, and DGPG…TNKI. Helical transmembrane passes span 8–28, 72–92, 114–133, 178–198, 211–228, and 265–286; these read FIAG…FETV, GSAY…YEPL, LAGA…FFLV, AMVR…FAKR, GLHL…CCVM, and IYKG…TLSL.

Belongs to the mitochondrial carrier (TC 2.A.29) family.

It is found in the mitochondrion inner membrane. Functionally, mitochondrial transporter that does not mediate citrate export from mitochondria to cytoplasm. Its exact function has still to be determined. This is Mitochondrial citrate transporter E from Aspergillus niger (strain ATCC 1015 / CBS 113.46 / FGSC A1144 / LSHB Ac4 / NCTC 3858a / NRRL 328 / USDA 3528.7).